The sequence spans 377 residues: TraB domain-containing protein (377 aa).

At Met1 the chain carries N-acetylmethionine. The interval Met1–Pro34 is disordered. Thr65 carries the phosphothreonine modification.

The sequence is that of TraB domain-containing protein (TRABD) from Bos taurus (Bovine).